The chain runs to 505 residues: Alkylglycerol monooxygenase (505 aa).

2 consecutive transmembrane segments (helical) span residues 56-76 (VSAW…ISGH) and 104-124 (AVAI…ELPW). The region spanning 130–262 (WIFCLFFQDF…FIIWDKMFNT (133 aa)) is the Fatty acid hydroxylase domain. The short motif at 145–149 (HRAVH) is the Histidine box-1 element. A Histidine box-2 motif is present at residues 158–162 (HTIHH). The short motif at 234-238 (HRVHH) is the Histidine box-3 element. The next 4 membrane-spanning stretches (helical) occupy residues 366-386 (ILVK…FFHF), 396-416 (LDCT…GAFF), 430-450 (CCGV…AGTH), and 452-472 (LFVI…VLVE).

It belongs to the sterol desaturase family. TMEM195 subfamily. It depends on Fe cation as a cofactor.

Its subcellular location is the endoplasmic reticulum membrane. It carries out the reaction 1-O-(1,2-saturated-alkyl)-sn-glycerol + (6R)-L-erythro-5,6,7,8-tetrahydrobiopterin + O2 = a 1-(1-hydroxyalkyl)-sn-glycerol + (6R)-L-erythro-6,7-dihydrobiopterin + H2O. In terms of biological role, glyceryl-ether monooxygenase that cleaves the O-alkyl bond of ether lipids. This chain is Alkylglycerol monooxygenase, found in Caenorhabditis elegans.